The chain runs to 422 residues: Histidine--tRNA ligase (422 aa).

Belongs to the class-II aminoacyl-tRNA synthetase family. In terms of assembly, homodimer.

Its subcellular location is the cytoplasm. It carries out the reaction tRNA(His) + L-histidine + ATP = L-histidyl-tRNA(His) + AMP + diphosphate + H(+). The sequence is that of Histidine--tRNA ligase from Lysinibacillus sphaericus (strain C3-41).